The sequence spans 67 residues: Conotoxin Cl6.7 (67 aa).

The first 24 residues, 1–24 (MKVTAVLMVAVLVLTACQLTTANT), serve as a signal peptide directing secretion. The propeptide occupies 25-39 (TDYVRRIPARKSTMS). 3 cysteine pairs are disulfide-bonded: Cys-43/Cys-58, Cys-50/Cys-62, and Cys-57/Cys-66.

This sequence belongs to the conotoxin O1 superfamily. Expressed by the venom duct.

The protein localises to the secreted. This is Conotoxin Cl6.7 from Californiconus californicus (California cone).